A 410-amino-acid chain; its full sequence is Pectate lyase PEL9 (410 aa).

A signal peptide spans 1 to 18; sequence MMGKSVWVFAALFPAVLA. Ca(2+) is bound by residues D191, D215, D216, and D219. N-linked (GlcNAc...) asparagine glycosylation is present at N234. Catalysis depends on K271, which acts as the Proton acceptor. Positions 342-351 are enriched in polar residues; it reads GEAPTSLSDE. Disordered regions lie at residues 342-361 and 381-410; these read GEAPTSLSDEQISDGNSWDG and ERNADGTIEPSGFLLPADGEEIGATTDWSA.

This sequence belongs to the polysaccharide lyase 9 family. Ca(2+) is required as a cofactor.

It localises to the secreted. The catalysed reaction is Eliminative cleavage of (1-&gt;4)-alpha-D-galacturonan to give oligosaccharides with 4-deoxy-alpha-D-galact-4-enuronosyl groups at their non-reducing ends.. Its activity is regulated as follows. Inhibited by iron ions. Activated in presence of the surfactant polysorbate 20, while inhibited in the presence of Triton X-100 and sodium dodecyl sulfate. Inhibited in presence of the organic solvents methanol, ethanol, propan-2-ol and acetone. Functionally, presents an endo-cleaving activity on the homogalacturonan (HG) region in pectin. Active on homogalacturonan with a degree of polymerization above 4, and does not appear to be affected by the degree of methylation of the substrate. Does not degrade linear rhamnogalacturonan. In Emericella nidulans (strain FGSC A4 / ATCC 38163 / CBS 112.46 / NRRL 194 / M139) (Aspergillus nidulans), this protein is Pectate lyase PEL9.